Consider the following 184-residue polypeptide: Protein GrpE (184 aa).

The span at 1–10 (MSQETEKDLE) shows a compositional bias: basic and acidic residues. Residues 1-38 (MSQETEKDLEQTQNEELVEEAQSDEKKDQEVDPVEAAQ) form a disordered region.

It belongs to the GrpE family. As to quaternary structure, homodimer.

The protein localises to the cytoplasm. Participates actively in the response to hyperosmotic and heat shock by preventing the aggregation of stress-denatured proteins, in association with DnaK and GrpE. It is the nucleotide exchange factor for DnaK and may function as a thermosensor. Unfolded proteins bind initially to DnaJ; upon interaction with the DnaJ-bound protein, DnaK hydrolyzes its bound ATP, resulting in the formation of a stable complex. GrpE releases ADP from DnaK; ATP binding to DnaK triggers the release of the substrate protein, thus completing the reaction cycle. Several rounds of ATP-dependent interactions between DnaJ, DnaK and GrpE are required for fully efficient folding. This Sulfurovum sp. (strain NBC37-1) protein is Protein GrpE.